The chain runs to 171 residues: Co-chaperone protein HscB homolog (171 aa).

The J domain occupies 2 to 74 (NHFELFGLPL…ISRAEYLLVQ (73 aa)).

This sequence belongs to the HscB family. Interacts with HscA and stimulates its ATPase activity.

Functionally, co-chaperone involved in the maturation of iron-sulfur cluster-containing proteins. Seems to help targeting proteins to be folded toward HscA. This chain is Co-chaperone protein HscB homolog, found in Vibrio atlanticus (strain LGP32) (Vibrio splendidus (strain Mel32)).